Consider the following 154-residue polypeptide: Ribosomal RNA large subunit methyltransferase H (154 aa).

S-adenosyl-L-methionine is bound by residues Gly-103 and 122 to 127 (FSKLTF).

This sequence belongs to the RNA methyltransferase RlmH family. As to quaternary structure, homodimer.

Its subcellular location is the cytoplasm. It carries out the reaction pseudouridine(1915) in 23S rRNA + S-adenosyl-L-methionine = N(3)-methylpseudouridine(1915) in 23S rRNA + S-adenosyl-L-homocysteine + H(+). Specifically methylates the pseudouridine at position 1915 (m3Psi1915) in 23S rRNA. This chain is Ribosomal RNA large subunit methyltransferase H, found in Caldicellulosiruptor bescii (strain ATCC BAA-1888 / DSM 6725 / KCTC 15123 / Z-1320) (Anaerocellum thermophilum).